Here is a 237-residue protein sequence, read N- to C-terminus: Sugar fermentation stimulation protein homolog (237 aa).

The protein belongs to the SfsA family.

This is Sugar fermentation stimulation protein homolog from Colwellia psychrerythraea (strain 34H / ATCC BAA-681) (Vibrio psychroerythus).